The sequence spans 482 residues: 2-succinylbenzoate--CoA ligase (482 aa).

This sequence belongs to the ATP-dependent AMP-binding enzyme family. MenE subfamily.

The enzyme catalyses 2-succinylbenzoate + ATP + CoA = 2-succinylbenzoyl-CoA + AMP + diphosphate. The protein operates within quinol/quinone metabolism; 1,4-dihydroxy-2-naphthoate biosynthesis; 1,4-dihydroxy-2-naphthoate from chorismate: step 5/7. It functions in the pathway quinol/quinone metabolism; menaquinone biosynthesis. Its function is as follows. Converts 2-succinylbenzoate (OSB) to 2-succinylbenzoyl-CoA (OSB-CoA). This is 2-succinylbenzoate--CoA ligase from Bacillus cereus (strain ATCC 14579 / DSM 31 / CCUG 7414 / JCM 2152 / NBRC 15305 / NCIMB 9373 / NCTC 2599 / NRRL B-3711).